Consider the following 141-residue polypeptide: uncharacterized protein (141 aa).

The next 2 helical transmembrane spans lie at 64-84 (IAAV…IEAI) and 112-132 (IVGS…LVLI).

The protein localises to the cell membrane. This is an uncharacterized protein from Sinorhizobium fredii (strain NBRC 101917 / NGR234).